We begin with the raw amino-acid sequence, 115 residues long: Photosystem II reaction center Psb28 protein (115 aa).

It belongs to the Psb28 family. Part of the photosystem II complex.

It is found in the plastid. The protein resides in the chloroplast thylakoid membrane. In Phaeodactylum tricornutum (strain CCAP 1055/1), this protein is Photosystem II reaction center Psb28 protein.